The sequence spans 494 residues: Tyrosinase (494 aa).

Cu cation-binding residues include H38, H53, C64, H224, H228, and H256.

The protein belongs to the tyrosinase family. Cu(2+) serves as cofactor.

It carries out the reaction 2 L-dopa + O2 = 2 L-dopaquinone + 2 H2O. The catalysed reaction is L-tyrosine + O2 = L-dopaquinone + H2O. The protein is Tyrosinase (mepA) of Rhizobium meliloti (Ensifer meliloti).